A 685-amino-acid polypeptide reads, in one-letter code: RING finger protein 145 (685 aa).

Helical transmembrane passes span 53 to 73 (YIAL…LTLP), 77 to 97 (LVQL…HQLS), 123 to 143 (FTTA…VMQT), 151 to 171 (AHLL…IVFI), 174 to 194 (FAMI…LLVP), 225 to 245 (LVLP…QIYT), 275 to 295 (YSLL…LTLC), 316 to 336 (TEGI…LQVI), 340 to 360 (FLLS…MLEI), 384 to 404 (SLCL…CQFF), 410 to 430 (LLII…TLLI), 460 to 480 (LLEF…TLFG), and 482 to 502 (WTVM…WLRA). An RING-type; atypical zinc finger spans residues 537–575 (CSICFQDMKSAVITPCSHFFHAACLKKWLYVQETCPLCH). The segment at 582 to 685 (LQPTSSPGTP…VSTSDVNCAS (104 aa)) is disordered. The span at 583–602 (QPTSSPGTPTQGTPAANQNP) shows a compositional bias: low complexity. A compositionally biased stretch (basic and acidic residues) spans 620-631 (EGIRAEEMKTSA).

It localises to the membrane. The sequence is that of RING finger protein 145 (rnf145) from Danio rerio (Zebrafish).